We begin with the raw amino-acid sequence, 197 residues long: MNLVPTVIEQSSRGERAYDIYSRLLKDRIIMLSGPIDDDLANSIISQLLFLDAQDSEKDIYLYINSPGGVVTAGLAIYDTMNFIKSDVQTIVMGMAASMASVLASSGTKGKRFALPHSEVMIHQPSGGAQGQQTEIEIAAEQILKTRKELNTILAENSGQPLEKINIDTERDNYLSAQDAVEYGLIDGIMEKNANLK.

Ser-98 acts as the Nucleophile in catalysis. His-123 is a catalytic residue.

It belongs to the peptidase S14 family. Fourteen ClpP subunits assemble into 2 heptameric rings which stack back to back to give a disk-like structure with a central cavity, resembling the structure of eukaryotic proteasomes.

It is found in the cytoplasm. It carries out the reaction Hydrolysis of proteins to small peptides in the presence of ATP and magnesium. alpha-casein is the usual test substrate. In the absence of ATP, only oligopeptides shorter than five residues are hydrolyzed (such as succinyl-Leu-Tyr-|-NHMec, and Leu-Tyr-Leu-|-Tyr-Trp, in which cleavage of the -Tyr-|-Leu- and -Tyr-|-Trp bonds also occurs).. In terms of biological role, cleaves peptides in various proteins in a process that requires ATP hydrolysis. Has a chymotrypsin-like activity. Plays a major role in the degradation of misfolded proteins. This chain is ATP-dependent Clp protease proteolytic subunit, found in Pediococcus pentosaceus (strain ATCC 25745 / CCUG 21536 / LMG 10740 / 183-1w).